Reading from the N-terminus, the 337-residue chain is Glucokinase (337 aa).

Position 11–16 (11–16 (ADIGGT)) interacts with ATP.

The protein belongs to the bacterial glucokinase family.

It localises to the cytoplasm. It carries out the reaction D-glucose + ATP = D-glucose 6-phosphate + ADP + H(+). The protein is Glucokinase of Xylella fastidiosa (strain M23).